A 707-amino-acid polypeptide reads, in one-letter code: Mitochondrial disaggregase (707 aa).

The transit peptide at 1–36 directs the protein to the mitochondrion; the sequence is MLGSLVLRRKALAPRLLLRLLRSPTLRGHGGASGRN. Positions 92–126 are autoinhibitory; sequence PGPEETLPGQDSWNGVPSRAGLGMCALAAALVVHC. ANK repeat units follow at residues 133–162, 166–195, 265–295, and 298–327; these read NKDA…DVNA, LGWT…DPNL, KGCT…PLQR, and MGHT…EKQR. ATP is bound by residues His-346, Ile-348, Ser-383, Gly-384, Ile-385, Gly-386, Lys-387, Thr-388, Glu-455, and Asn-496. The segment at 507 to 535 is regulatory; slows ATPase and disaggregase activities; sequence LQLRQEALEMSRNRIAENLGDVQISDKIT. ATP is bound at residue Arg-561. Residue Lys-589 is modified to N6-acetyllysine. Position 620 (Arg-620) interacts with ATP.

It belongs to the ClpA/ClpB family. In terms of assembly, homododecamer when substrate-bound; the homododecamer consists of 2 homohexamers stacked head-to-head via ANK repeat-mediated interactions. The active substrate-bound form is likely to exist in a dynamic equilibrium between homohexamers and homododecamers. Homotetradecamer in the unbound state which is remodeled upon substrate binding into the homododecamer. Interacts with PHB and PHB2. Interacts with MAVS; the interaction is enhanced by Sendai virus infection. Post-translationally, proteolytically cleaved by protease PARL. ATP-dependent protein disaggregase activity is stimulated by PARL-mediated cleavage of the N-terminal autoinhibitory peptide. As to expression, widely expressed (at protein level). Expressed in fetal, as well as in adult tissues, with highest levels in adult brain, including thalamus, hippocampus, occipital cortex and parietal cortex. Low expression in granulocytes.

It localises to the mitochondrion intermembrane space. It catalyses the reaction ATP + H2O = ADP + phosphate + H(+). Disaggregase activity is inhibited by ADP. Its function is as follows. Functions as a regulatory ATPase and participates in secretion/protein trafficking process. Has ATP-dependent protein disaggregase activity and is required to maintain the solubility of key mitochondrial proteins. Involved in mitochondrial-mediated antiviral innate immunity, activates RIG-I-mediated signal transduction and production of IFNB1 and pro-inflammatory cytokine IL6. Plays a role in granulocyte differentiation. This chain is Mitochondrial disaggregase, found in Homo sapiens (Human).